The primary structure comprises 278 residues: Large ribosomal subunit protein uL2 (278 aa).

Disordered stretches follow at residues 1 to 20 (MGIR…SVSD), 25 to 58 (TRST…GGGH), and 223 to 278 (GVVM…GKKR). The span at 37–58 (LHGKGGRNAHGRITTRHKGGGH) shows a compositional bias: basic residues. Residues 253–268 (PEGRTRKPNKPSDKLI) show a composition bias toward basic and acidic residues. Residues 269–278 (VRRRRTGKKR) are compositionally biased toward basic residues.

It belongs to the universal ribosomal protein uL2 family. As to quaternary structure, part of the 50S ribosomal subunit. Forms a bridge to the 30S subunit in the 70S ribosome.

Its function is as follows. One of the primary rRNA binding proteins. Required for association of the 30S and 50S subunits to form the 70S ribosome, for tRNA binding and peptide bond formation. It has been suggested to have peptidyltransferase activity; this is somewhat controversial. Makes several contacts with the 16S rRNA in the 70S ribosome. This chain is Large ribosomal subunit protein uL2, found in Mycolicibacterium smegmatis (strain ATCC 700084 / mc(2)155) (Mycobacterium smegmatis).